The following is a 415-amino-acid chain: uncharacterized protein (415 aa).

Positions 85, 91, 94, and 175 each coordinate [4Fe-4S] cluster. S-adenosyl-L-methionine-binding residues include Gln248, Tyr276, Glu297, and Asn344. Cys371 functions as the Nucleophile in the catalytic mechanism.

It belongs to the class I-like SAM-binding methyltransferase superfamily. RNA M5U methyltransferase family.

This is an uncharacterized protein from Leptospira interrogans serogroup Icterohaemorrhagiae serovar copenhageni (strain Fiocruz L1-130).